A 141-amino-acid chain; its full sequence is Large ribosomal subunit protein uL11 (141 aa).

The protein belongs to the universal ribosomal protein uL11 family. As to quaternary structure, part of the ribosomal stalk of the 50S ribosomal subunit. Interacts with L10 and the large rRNA to form the base of the stalk. L10 forms an elongated spine to which L12 dimers bind in a sequential fashion forming a multimeric L10(L12)X complex. Post-translationally, one or more lysine residues are methylated.

Forms part of the ribosomal stalk which helps the ribosome interact with GTP-bound translation factors. The chain is Large ribosomal subunit protein uL11 from Moorella thermoacetica (strain ATCC 39073 / JCM 9320).